The following is a 94-amino-acid chain: MFGLINIGFGNVIAGDRIVAIVNPESAPLKRLKEDAKEEGKLIDATYGRKTRAILISDSNHIILSAIQPETIAQRFMQSFFEIEEQLDKIRRKG.

It belongs to the RemA family.

The polypeptide is Putative regulatory protein THA_332 (Thermosipho africanus (strain TCF52B)).